Here is a 279-residue protein sequence, read N- to C-terminus: Putative pyruvate, phosphate dikinase regulatory protein (279 aa).

156–163 provides a ligand contact to ADP; it reads GISRVGKT.

The protein belongs to the pyruvate, phosphate/water dikinase regulatory protein family. PDRP subfamily.

It catalyses the reaction N(tele)-phospho-L-histidyl/L-threonyl-[pyruvate, phosphate dikinase] + ADP = N(tele)-phospho-L-histidyl/O-phospho-L-threonyl-[pyruvate, phosphate dikinase] + AMP + H(+). It carries out the reaction N(tele)-phospho-L-histidyl/O-phospho-L-threonyl-[pyruvate, phosphate dikinase] + phosphate + H(+) = N(tele)-phospho-L-histidyl/L-threonyl-[pyruvate, phosphate dikinase] + diphosphate. Functionally, bifunctional serine/threonine kinase and phosphorylase involved in the regulation of the pyruvate, phosphate dikinase (PPDK) by catalyzing its phosphorylation/dephosphorylation. This Chloroflexus aurantiacus (strain ATCC 29366 / DSM 635 / J-10-fl) protein is Putative pyruvate, phosphate dikinase regulatory protein.